A 601-amino-acid chain; its full sequence is Peptide transporter PTR2 (601 aa).

A compositionally biased stretch (polar residues) spans 1-10 (MLNHPSQGSD). Residues 1–66 (MLNHPSQGSD…DEDFEGPTEE (66 aa)) are disordered. Residues 1–150 (MLNHPSQGSD…PVFGGYVADT (150 aa)) lie on the Extracellular side of the membrane. A compositionally biased stretch (basic and acidic residues) spans 14 to 28 (DEKQGDFPVIEEEKT). A Phosphotyrosine modification is found at tyrosine 37. Phosphoserine is present on residues serine 39 and serine 45. Residues 42 to 53 (VANSTERYNLSP) show a composition bias toward polar residues. The span at 55-66 (PEDEDFEGPTEE) shows a compositional bias: acidic residues. Residues 151–172 (FWGKYNTICCGTAIYIAGIFIL) form a helical membrane-spanning segment. At 173–182 (FITSIPSVGN) the chain is on the cytoplasmic side. The chain crosses the membrane as a helical span at residues 183 to 202 (RDSAIGGFIAAIILIGIATG). Residues 203–210 (MIKANLSV) lie on the Extracellular side of the membrane. A helical transmembrane segment spans residues 211–229 (LIADQLPKRKPSIKVLKSG). At 230–267 (ERVIVDSNITLQNVFMFFYFMINVGSLSLMATTELEYH) the chain is on the cytoplasmic side. Residues 268–287 (KGFWAAYLLPFCFFWIAVVT) form a helical membrane-spanning segment. Over 288–294 (LIFGKKQ) the chain is Extracellular. The chain crosses the membrane as a helical span at residues 295–316 (YIQRPIGDKVIAKSFKVCWILT). Residues 317–378 (KNKFDFNAAK…ISSFITQASM (62 aa)) are Cytoplasmic-facing. A helical transmembrane segment spans residues 379–399 (MELHGIPNDFLQAFDSIALII). Residues 400 to 412 (FIPIFEKFVYPFI) are Extracellular-facing. A helical membrane pass occupies residues 413–429 (RRYTPLKPITKIFFGFM). The Cytoplasmic segment spans residues 430–448 (FGSFAMTWAAVLQSFVYKA). Residues 449-466 (GPWYNEPLGHNTPNHVHV) traverse the membrane as a helical segment. Residues 467–494 (CWQIPAYVLISFSEIFASITGLEYAYSK) are Extracellular-facing. A helical transmembrane segment spans residues 495–513 (APASMKSFIMSIFLLTNAF). At 514-526 (GSAIGCALSPVTV) the chain is on the cytoplasmic side. The chain crosses the membrane as a helical span at residues 527–547 (DPKFTWLFTGLAVACFISGCL). Over 548 to 554 (FWLCFRK) the chain is Extracellular. A helical membrane pass occupies residues 555-577 (YNDTEEEMNAMDYEEEDEFDLNP). Residues 578–601 (ISAPKANDIEILEPMESLRSTTKY) lie on the Cytoplasmic side of the membrane. Serine 594 carries the phosphoserine modification.

Belongs to the major facilitator superfamily. Proton-dependent oligopeptide transporter (POT/PTR) (TC 2.A.17) family.

Its subcellular location is the membrane. Its function is as follows. Uptake of small peptides. The polypeptide is Peptide transporter PTR2 (PTR2) (Saccharomyces cerevisiae (strain ATCC 204508 / S288c) (Baker's yeast)).